A 199-amino-acid chain; its full sequence is Putative peroxiredoxin ycf42 (199 aa).

The Thioredoxin domain maps to 8-165 (LQVGQIAPDF…TLRVLQAIQY (158 aa)). Cysteine 53 functions as the Cysteine sulfenic acid (-SOH) intermediate in the catalytic mechanism.

The protein belongs to the peroxiredoxin family. AhpC/Prx1 subfamily. As to quaternary structure, homodimer; disulfide-linked, upon oxidation. The Cys-53-SH group is the primary site of oxidation by H(2)O(2), and the oxidized Cys-53 (probably Cys-SOH) rapidly reacts with Cys-174-SH of the other subunit to form an intermolecular disulfide. This disulfide is subsequently reduced by thioredoxin.

Its subcellular location is the plastid. The protein localises to the chloroplast. It catalyses the reaction a hydroperoxide + [thioredoxin]-dithiol = an alcohol + [thioredoxin]-disulfide + H2O. Thiol-specific peroxidase that catalyzes the reduction of hydrogen peroxide and organic hydroperoxides to water and alcohols, respectively. Plays a role in cell protection against oxidative stress by detoxifying peroxides. In Porphyra purpurea (Red seaweed), this protein is Putative peroxiredoxin ycf42 (ycf42).